Reading from the N-terminus, the 365-residue chain is Peptide chain release factor 2 (365 aa).

The residue at position 252 (Q252) is an N5-methylglutamine.

Belongs to the prokaryotic/mitochondrial release factor family. Methylated by PrmC. Methylation increases the termination efficiency of RF2.

It localises to the cytoplasm. Its function is as follows. Peptide chain release factor 2 directs the termination of translation in response to the peptide chain termination codons UGA and UAA. The chain is Peptide chain release factor 2 from Aliivibrio fischeri (strain ATCC 700601 / ES114) (Vibrio fischeri).